Reading from the N-terminus, the 262-residue chain is Phosphatidylglycerol--prolipoprotein diacylglyceryl transferase (262 aa).

4 helical membrane-spanning segments follow: residues 17–37 (LAIH…YALG), 57–77 (LIFY…VLFY), 95–115 (GGMS…LFAH), and 119–139 (LGFF…LAAG). A 1,2-diacyl-sn-glycero-3-phospho-(1'-sn-glycerol) is bound at residue Arg-140. The next 3 helical transmembrane spans lie at 173-193 (PSQL…LWWY), 200-220 (AGQV…LVEF), and 227-247 (FLGL…PMVL).

Belongs to the Lgt family.

It is found in the cell inner membrane. It catalyses the reaction L-cysteinyl-[prolipoprotein] + a 1,2-diacyl-sn-glycero-3-phospho-(1'-sn-glycerol) = an S-1,2-diacyl-sn-glyceryl-L-cysteinyl-[prolipoprotein] + sn-glycerol 1-phosphate + H(+). Its pathway is protein modification; lipoprotein biosynthesis (diacylglyceryl transfer). In terms of biological role, catalyzes the transfer of the diacylglyceryl group from phosphatidylglycerol to the sulfhydryl group of the N-terminal cysteine of a prolipoprotein, the first step in the formation of mature lipoproteins. This is Phosphatidylglycerol--prolipoprotein diacylglyceryl transferase from Bordetella bronchiseptica (strain ATCC BAA-588 / NCTC 13252 / RB50) (Alcaligenes bronchisepticus).